Consider the following 398-residue polypeptide: MAKLTVKDVDLKGKKVLVRVDFNVPLKDGVITNDNRITAALPTIKYIIEQGGRAILFSHLGRVKEEADKEGKSLAPVAADLAAKLGQDVVFPGVTRGSKLEEAINALEDGQVLLVENTRFEDVDGKKESKNDEELGKYWASLGDGIFVNDAFGTAHRAHASNVGISANVEKAVAGFLLENEIAYIQEAVETPERPFVAILGGSKVSDKIGVIENLLEKADKVLIGGGMTYTFYKAQGIEIGNSLVEEDKLDVAKDLLEKSNGKLILPVDSKEANAFAGYTEVRDTEGEAVSEGFLGLDIGPKSIAEFDQALTGAKTVVWNGPMGVFENPDFQAGTIGVMDAIVKQPGVKSIIGGGDSAAAAINLGRADKFSWISTGGGASMELLEGKVLPGLAALTEK.

Residues 21 to 23, arginine 36, 59 to 62, arginine 119, and arginine 157 contribute to the substrate site; these read DFN and HLGR. Residues lysine 208, glycine 296, glutamate 327, and 354 to 357 contribute to the ATP site; that span reads GGDS.

Belongs to the phosphoglycerate kinase family. In terms of assembly, monomer.

Its subcellular location is the cytoplasm. The catalysed reaction is (2R)-3-phosphoglycerate + ATP = (2R)-3-phospho-glyceroyl phosphate + ADP. It functions in the pathway carbohydrate degradation; glycolysis; pyruvate from D-glyceraldehyde 3-phosphate: step 2/5. The protein is Phosphoglycerate kinase (pgk) of Streptococcus pyogenes serotype M1.